Reading from the N-terminus, the 301-residue chain is Cytosolic sulfotransferase 2 (301 aa).

Residue 53 to 58 (KAGTTW) coordinates 3'-phosphoadenylyl sulfate. His115 acts as the Proton acceptor in catalysis. 3'-phosphoadenylyl sulfate-binding positions include Arg137, Ser145, Tyr201, 235–240 (VQFDVM), and 263–265 (RKG).

This sequence belongs to the sulfotransferase 1 family. In terms of tissue distribution, expressed in liver.

The protein resides in the cytoplasm. With respect to regulation, inhibited by Co(2+), Zn(2+), Cd(2+) and Pb(2+) ions. Inactivated by Hg(2+) and Cu(2+) ions. Its function is as follows. Sulfotransferase that utilizes 3'-phospho-5'-adenylyl sulfate (PAPS) as sulfonate donor to catalyze the sulfate conjugation of a variety of xenobiotic and endogenous compounds, including 2-naphthol, hydroxychlorobiphenyls, T3 (triiodo-L-thyronine), T4 (thyroxine), estrone and DOPA. This is Cytosolic sulfotransferase 2 from Danio rerio (Zebrafish).